A 47-amino-acid polypeptide reads, in one-letter code: Lysis protein for colicin E8 (47 aa).

Residues 1–19 (MKKITGIILLLLAVIILAA) form the signal peptide. The N-palmitoyl cysteine moiety is linked to residue Cys20. A lipid anchor (S-diacylglycerol cysteine) is attached at Cys20.

It is found in the cell outer membrane. Lysis proteins are required for both colicin release and partial cell lysis. This is Lysis protein for colicin E8 (lys) from Escherichia coli.